Reading from the N-terminus, the 831-residue chain is Serine/threonine-protein kinase ATG1 (831 aa).

One can recognise a Protein kinase domain in the interval 21–321 (YSVEKEIGKG…FTDFFNNEVV (301 aa)). ATP contacts are provided by residues 27–35 (IGKGSFAVV) and Lys-50. Asp-168 acts as the Proton acceptor in catalysis. Polar residues-rich tracts occupy residues 360–382 (QQESAHIPPTQTDENTSVQTGVR) and 405–419 (NSQNPEQSYQSASQK). A disordered region spans residues 360–419 (QQESAHIPPTQTDENTSVQTGVRRTSGKERLATNHPPHQQIHPEDNSQNPEQSYQSASQK).

This sequence belongs to the protein kinase superfamily. Ser/Thr protein kinase family. APG1/unc-51/ULK1 subfamily. Homodimer. Forms a ternary complex with ATG13 and ATG17.

The protein localises to the cytoplasm. The protein resides in the preautophagosomal structure membrane. It catalyses the reaction L-seryl-[protein] + ATP = O-phospho-L-seryl-[protein] + ADP + H(+). It carries out the reaction L-threonyl-[protein] + ATP = O-phospho-L-threonyl-[protein] + ADP + H(+). Functionally, serine/threonine protein kinase involved in the cytoplasm to vacuole transport (Cvt) and found to be essential in autophagy, where it is required for the formation of autophagosomes. Involved in the clearance of protein aggregates which cannot be efficiently cleared by the proteasome. Required for selective autophagic degradation of the nucleus (nucleophagy) as well as for mitophagy which contributes to regulate mitochondrial quantity and quality by eliminating the mitochondria to a basal level to fulfill cellular energy requirements and preventing excess ROS production. Also involved in endoplasmic reticulum-specific autophagic process, in selective removal of ER-associated degradation (ERAD) substrates. Plays a key role in ATG9 and ATG23 cycling through the pre-autophagosomal structure and is necessary to promote ATG18 binding to ATG9 through phosphorylation of ATG9. Catalyzes phosphorylation of ATG4, decreasing the interaction between ATG4 and ATG8 and impairing deconjugation of PE-conjugated forms of ATG8. The polypeptide is Serine/threonine-protein kinase ATG1 (Kluyveromyces lactis (strain ATCC 8585 / CBS 2359 / DSM 70799 / NBRC 1267 / NRRL Y-1140 / WM37) (Yeast)).